A 394-amino-acid polypeptide reads, in one-letter code: MAADGTGVVGGGAVGGGLPKDGLQDAKCPEPIPNRRRASSLSRDAQRRAYQWCREYLGGAWRRARPEELSVCPVSGGLSNLLFRCSLPNHVPSVGGEPREVLLRLYGAILQGVDSLVLESVMFAILAERSLGPQLYGVFPEGRLEQYLPSRPLKTQELRDPVLSGAIATRMARFHGMEMPFTKEPRWLFGTMERYLKQIQDLPSTSLPQMNLVEMYSLKDEMNSLRKLLDDTPSPVVFCHNDIQEGNILLLSEPDSDDNLMLVDFEYSSYNYRGFDIGNHFCEWVYDYTYEEWPFYKARPTDYPTREQQLHFIRHYLAEVQKGEILSEEEQKKREEELLLEISRYSLASHFFWGLWSTLQASMSTIEFGYLEYAQSRFQFYFQQKGQLTSSPSS.

The tract at residues 1–42 (MAADGTGVVGGGAVGGGLPKDGLQDAKCPEPIPNRRRASSLS) is disordered. N-acetylalanine is present on Ala2. Residues 7–19 (GVVGGGAVGGGLP) are compositionally biased toward gly residues. ATP contacts are provided by residues 75–81 (SGGLSNL), Arg104, 146–152 (QYLPSRP), Gln244, and Asp264. 77-79 (GLS) lines the substrate pocket.

This sequence belongs to the choline/ethanolamine kinase family. Homodimer, and heterodimer with CHKA. In terms of tissue distribution, expressed ubiquitously with the highest level in testis.

It catalyses the reaction choline + ATP = phosphocholine + ADP + H(+). The catalysed reaction is ethanolamine + ATP = phosphoethanolamine + ADP + H(+). It participates in phospholipid metabolism; phosphatidylethanolamine biosynthesis; phosphatidylethanolamine from ethanolamine: step 1/3. Functionally, has a key role in phospholipid metabolism, and catalyzes the first step of phosphatidylethanolamine and phosphatidylcholine biosynthesis. The sequence is that of Choline/ethanolamine kinase (Chkb) from Mus musculus (Mouse).